Consider the following 375-residue polypeptide: uncharacterized protein (375 aa).

The disordered stretch occupies residues 54-78 (EGIPPPTQSQEPLKPQENISRPIHH).

This is an uncharacterized protein from Bos taurus (Bovine).